Consider the following 345-residue polypeptide: MAPSVISLRSHNSFSLSVSASCIKVADTQDKLIEEWRVASASQEPVLLLGEGSNVLFLEDFLGTILLNRLKGIDIREESDGWYLHVGAGENWHQLVEYTLKCGITGLENLALIPGCVGSAPIQNIGAYGIELQHVCDYVELLDLTEGKTIHLTTEECQFGYRESIFKHQYRYGFAITAVGIFLKKEWNPVLNYGDLAKLNPATVTPQQVFDSVCHMRRSKLPDPVVTGNAGSFFKNPIVTKQHADSILREYPNMPQYLQADGNVKLAAGWLIDQCKLKGFQLGGAAVHEQQALVLINKSNAKGSDIVELARYVRNQVAAKFSIQLEPEVRFIAAHGEVNAIEVLS.

Residues 16-186 (LSVSASCIKV…TAVGIFLKKE (171 aa)) form the FAD-binding PCMH-type domain. Arg162 is an active-site residue. The active-site Proton donor is the Ser232. Glu328 is a catalytic residue.

It belongs to the MurB family. Requires FAD as cofactor.

The protein resides in the cytoplasm. It carries out the reaction UDP-N-acetyl-alpha-D-muramate + NADP(+) = UDP-N-acetyl-3-O-(1-carboxyvinyl)-alpha-D-glucosamine + NADPH + H(+). Its pathway is cell wall biogenesis; peptidoglycan biosynthesis. Its function is as follows. Cell wall formation. The polypeptide is UDP-N-acetylenolpyruvoylglucosamine reductase (Pectobacterium atrosepticum (strain SCRI 1043 / ATCC BAA-672) (Erwinia carotovora subsp. atroseptica)).